A 636-amino-acid chain; its full sequence is DNA mismatch repair protein MutL (636 aa).

The span at 332-344 shows a compositional bias: basic and acidic residues; sequence HAGEQGDSLRTDI. Disordered stretches follow at residues 332–360 and 417–443; these read HAGE…PADN and ASAP…SDDA. Over residues 417-437 the composition is skewed to low complexity; sequence ASAPADAAPAQASEPAAAPQA.

This sequence belongs to the DNA mismatch repair MutL/HexB family.

In terms of biological role, this protein is involved in the repair of mismatches in DNA. It is required for dam-dependent methyl-directed DNA mismatch repair. May act as a 'molecular matchmaker', a protein that promotes the formation of a stable complex between two or more DNA-binding proteins in an ATP-dependent manner without itself being part of a final effector complex. The protein is DNA mismatch repair protein MutL of Ralstonia nicotianae (strain ATCC BAA-1114 / GMI1000) (Ralstonia solanacearum).